Here is a 251-residue protein sequence, read N- to C-terminus: MNEAVKTLDGWFCLHDFRSIDWAAWRELNPGNQELMLNELSHFLSDMEITKNIGEGEHTIYSILGQKADLVFFTLRDSLEALNEVENRFNKLAIADYLLPTYSYISVVELSNYLASHMAGGDDPYQNKGVRARLYPALPPKKHICFYPMSKKRDGADNWYMLPMEERQQLIRDHGLIGRSYAGKVQQIIGGSIGFDDYEWGVTLFSDDALEFKRIVTEMRFDEASARYAEFGSFFIGNLLLSEQLSKLFTI.

Fe-coproporphyrin III contacts are provided by residues arginine 133, 147 to 151 (YPMSK), histidine 174, glutamine 187, and serine 225. The active site involves tyrosine 147.

This sequence belongs to the ChdC family. Type 1 subfamily. Homopentamer. Homohexamer in solution. Fe-coproporphyrin III serves as cofactor.

The catalysed reaction is Fe-coproporphyrin III + 2 H2O2 + 2 H(+) = heme b + 2 CO2 + 4 H2O. It catalyses the reaction Fe-coproporphyrin III + H2O2 + H(+) = harderoheme III + CO2 + 2 H2O. It carries out the reaction harderoheme III + H2O2 + H(+) = heme b + CO2 + 2 H2O. The protein operates within porphyrin-containing compound metabolism; protoheme biosynthesis. In terms of biological role, involved in coproporphyrin-dependent heme b biosynthesis. Catalyzes the decarboxylation of Fe-coproporphyrin III (coproheme) to heme b (protoheme IX), the last step of the pathway. The reaction occurs in a stepwise manner with a three-propionate intermediate. This is Coproheme decarboxylase from Listeria monocytogenes serovar 1/2a (strain ATCC BAA-679 / EGD-e).